A 161-amino-acid polypeptide reads, in one-letter code: Epithelial membrane protein 2 (161 aa).

Helical transmembrane passes span 1–21 (MLVI…LLFI), 67–87 (TMIL…LQLF), 95–115 (FVFT…GASI), and 137–157 (FVVA…YLVL).

The protein belongs to the PMP-22/EMP/MP20 family. As to expression, expressed in the arches, orbits, pectoral fins, vessels, pronephric renal tubules, and glomeruli.

It localises to the golgi apparatus membrane. Its subcellular location is the cell membrane. The protein resides in the apical cell membrane. It is found in the membrane raft. The protein localises to the cytoplasm. It localises to the nucleus. Its subcellular location is the perinuclear region. In terms of biological role, functions as a key regulator of cell membrane composition by regulating protein surface expression. Also, plays a role in regulation of processes including cell migration, cell proliferation, cell contraction and cell adhesion. May play a role in glomerular filtration. The sequence is that of Epithelial membrane protein 2 (emp2) from Danio rerio (Zebrafish).